The primary structure comprises 275 residues: Phosphonoacetaldehyde hydrolase (275 aa).

The active-site Nucleophile is the D15. Residues D15 and A17 each contribute to the Mg(2+) site. K56 acts as the Schiff-base intermediate with substrate in catalysis. D189 is a Mg(2+) binding site.

It belongs to the HAD-like hydrolase superfamily. PhnX family. As to quaternary structure, homodimer. Mg(2+) serves as cofactor.

The enzyme catalyses phosphonoacetaldehyde + H2O = acetaldehyde + phosphate + H(+). In terms of biological role, involved in phosphonate degradation. The polypeptide is Phosphonoacetaldehyde hydrolase (Pseudomonas entomophila (strain L48)).